The sequence spans 390 residues: MLSREDFYMIKQMRQQGAYIVDIATQIGCSERTVRRYLKYPEPPARKTRHKMVKLKPFMDYIDMRLAENVWNSEVIFAEIKAMGYTGGRSMLRYYIQPKRKMRPSKRTVRFETQPRYQLQHDWGEVEVEVAGQRCKVNFAVNTLGFSRRFHVFAAPKQDAEHTYESLVRAFRYFGGCVKTVLVDNQKAAVLKNNNGKVVFNSGFLLLADHYNFLPRACRPRRARTKGKVERMVKYLKENFFVRYRRFDSFTHVNQQLEQWIADVADKRELRQFKETPEQRFALEQEHLQPLPDTDFDTSYFDIRHVSWDSYIEVGGNRYSVPEALCGQPVSIRISLDDELRIYSNEKLVASHRLCSASSGWQTVPEHHAPLWQQVSQVEHRPLSAYEELL.

One can recognise an HTH IS21-type domain in the interval 5–66 (EDFYMIKQMR…PFMDYIDMRL (62 aa)). A DNA-binding region (H-T-H motif) is located at residues 20-39 (IVDIATQIGCSERTVRRYLK). The Integrase catalytic domain maps to 111-285 (FETQPRYQLQ…TPEQRFALEQ (175 aa)).

The protein belongs to the transposase IS21/IS408/IS1162 family.

In terms of biological role, involved in the transposition of the insertion sequence. The chain is Transposase for insertion sequence element IS21 (istA) from Pseudomonas aeruginosa.